We begin with the raw amino-acid sequence, 172 residues long: Small ribosomal subunit protein uS5 (172 aa).

An S5 DRBM domain is found at 17 to 80 (LKEKMIQVNR…DAARRDMVKV (64 aa)).

This sequence belongs to the universal ribosomal protein uS5 family. As to quaternary structure, part of the 30S ribosomal subunit. Contacts proteins S4 and S8.

Functionally, with S4 and S12 plays an important role in translational accuracy. In terms of biological role, located at the back of the 30S subunit body where it stabilizes the conformation of the head with respect to the body. The protein is Small ribosomal subunit protein uS5 of Methylibium petroleiphilum (strain ATCC BAA-1232 / LMG 22953 / PM1).